We begin with the raw amino-acid sequence, 304 residues long: Oxygen-dependent coproporphyrinogen-III oxidase (304 aa).

A substrate-binding site is contributed by S93. Residues H97 and H107 each coordinate a divalent metal cation. H107 (proton donor) is an active-site residue. N109–R111 contacts substrate. Residues H146 and H176 each coordinate a divalent metal cation. The interval Y241 to G276 is important for dimerization. G259 to R261 lines the substrate pocket.

The protein belongs to the aerobic coproporphyrinogen-III oxidase family. Homodimer. It depends on a divalent metal cation as a cofactor.

It is found in the cytoplasm. The catalysed reaction is coproporphyrinogen III + O2 + 2 H(+) = protoporphyrinogen IX + 2 CO2 + 2 H2O. Its pathway is porphyrin-containing compound metabolism; protoporphyrin-IX biosynthesis; protoporphyrinogen-IX from coproporphyrinogen-III (O2 route): step 1/1. Involved in the heme biosynthesis. Catalyzes the aerobic oxidative decarboxylation of propionate groups of rings A and B of coproporphyrinogen-III to yield the vinyl groups in protoporphyrinogen-IX. The polypeptide is Oxygen-dependent coproporphyrinogen-III oxidase (Pseudomonas savastanoi pv. phaseolicola (strain 1448A / Race 6) (Pseudomonas syringae pv. phaseolicola (strain 1448A / Race 6))).